Reading from the N-terminus, the 205-residue chain is Isochorismatase domain-containing protein 2 (205 aa).

Residues Ser-7 and Ser-202 each carry the phosphoserine modification.

This sequence belongs to the isochorismatase family. As to quaternary structure, interacts with CDKN2A.

It localises to the cytoplasm. It is found in the nucleus. The polypeptide is Isochorismatase domain-containing protein 2 (ISOC2) (Homo sapiens (Human)).